The chain runs to 244 residues: 5-oxoprolinase subunit A (244 aa).

Belongs to the LamB/PxpA family. Forms a complex composed of PxpA, PxpB and PxpC.

It catalyses the reaction 5-oxo-L-proline + ATP + 2 H2O = L-glutamate + ADP + phosphate + H(+). Catalyzes the cleavage of 5-oxoproline to form L-glutamate coupled to the hydrolysis of ATP to ADP and inorganic phosphate. In Shigella flexneri serotype 5b (strain 8401), this protein is 5-oxoprolinase subunit A.